Consider the following 112-residue polypeptide: ATP synthase epsilon chain (112 aa).

The protein belongs to the ATPase epsilon chain family. In terms of assembly, F-type ATPases have 2 components, CF(1) - the catalytic core - and CF(0) - the membrane proton channel. CF(1) has five subunits: alpha(3), beta(3), gamma(1), delta(1), epsilon(1). CF(0) has three main subunits: a, b and c.

It localises to the cell inner membrane. Functionally, produces ATP from ADP in the presence of a proton gradient across the membrane. The polypeptide is ATP synthase epsilon chain (Rickettsia peacockii (strain Rustic)).